The sequence spans 2698 residues: Zinc finger protein 292 (2698 aa).

The C2H2-type 1 zinc finger occupies 567–589 (YSCPICAKNFNSKDSFVPHVTLH). Ser654 bears the Phosphoserine mark. 6 consecutive C2H2-type zinc fingers follow at residues 681-705 (FNCP…VKGH), 722-744 (VICQ…LQMH), 750-774 (YICI…RKEH), 779-803 (AKCL…EAQH), 807-831 (YTCK…QDGH), and 1085-1110 (FSCQ…KTAH). Residues 822-834 (SEMEKHQDGHSHP) are compositionally biased toward basic and acidic residues. Residues 822-894 (SEMEKHQDGH…AEPAVTKHGQ (73 aa)) are disordered. N6-acetyllysine is present on Lys1104. A Phosphoserine modification is found at Ser1146. Over residues 1278-1325 (NSTNHYPSQTDGNINSSFLKGGSSENGVFPSQVSSADDFSSTSAQPST) the composition is skewed to polar residues. Residues 1278-1349 (NSTNHYPSQT…KERKPKHNKR (72 aa)) form a disordered region. The segment at 1361-1383 (FICSRCYRAFTNPRSLGGHLSKR) adopts a C2H2-type 8; degenerate zinc-finger fold. Composition is skewed to polar residues over residues 1574–1603 (FSSS…TRSS) and 1624–1633 (SVSNTSQNVL). The tract at residues 1574–1656 (FSSSTEPPQN…PVPDTNTRSD (83 aa)) is disordered. 2 consecutive C2H2-type zinc fingers follow at residues 1879 to 1904 (FVCQ…GKIH) and 1924 to 1949 (FKCV…QLVH). Residues 1964 to 1997 (PYGRKSQSENLSSPQNNQVKKQPSMAEETKTESQ) form a disordered region. Positions 1971-1984 (SENLSSPQNNQVKK) are enriched in polar residues. Lys2020 carries the N6-acetyllysine modification. The span at 2021 to 2032 (QLAEKKSPEKPE) shows a compositional bias: basic and acidic residues. Residues 2021–2075 (QLAEKKSPEKPESSSQPVTSSAEQYNANLANLKTKGRKNKRHRKEKEEKREKNPV) form a disordered region. Residues 2038-2051 (VTSSAEQYNANLAN) show a composition bias toward polar residues. A compositionally biased stretch (basic residues) spans 2054 to 2064 (TKGRKNKRHRK). C2H2-type zinc fingers lie at residues 2091–2116 (YCCV…QAVH), 2149–2174 (FRCQ…MKLH), 2193–2218 (FPCD…EVDH), and 2233–2258 (YKCD…FNKH). Residues 2262-2271 (HKAHLIRPRK) show a composition bias toward basic residues. The disordered stretch occupies residues 2262 to 2323 (HKAHLIRPRK…KSNLENKSAK (62 aa)). The segment at 2362–2386 (YPCMIKGCTSVVTSESNIIRHYKCH) adopts a C2H2-type 15 zinc-finger fold. Disordered stretches follow at residues 2411 to 2454 (GKEI…GEKD), 2467 to 2553 (LINE…EEHP), and 2580 to 2608 (KQKK…HVDK). The segment covering 2421 to 2437 (KNDKKDPDSSVLEKNDN) has biased composition (basic and acidic residues). Residues 2470-2488 (EDSTNAENQGNTTLKGNNE) show a composition bias toward polar residues. Composition is skewed to basic and acidic residues over residues 2489 to 2501 (FQEH…ERQK) and 2580 to 2590 (KQKKNSDRDHS). Residues 2596-2606 (RGSHSSSRRHV) show a composition bias toward basic residues.

It belongs to the krueppel C2H2-type zinc-finger protein family. In terms of tissue distribution, expressed in postnatal day 1 (P1) pituitary. Also detected in presomatotrophic cell line GHFT1-5.

It is found in the nucleus. May be involved in transcriptional regulation. The sequence is that of Zinc finger protein 292 from Mus musculus (Mouse).